A 917-amino-acid polypeptide reads, in one-letter code: MLX-interacting protein (917 aa).

Positions 1 to 72 (MAADVFMCSP…AGPGREEPPR (72 aa)) are disordered. At alanine 2 the chain carries N-acetylalanine. Residues serine 9, serine 33, and serine 39 each carry the phosphoserine modification. A compositionally biased stretch (acidic residues) spans 27-37 (PEDDDDSDTDE). Over residues 47 to 57 (ATSARAHASAA) the composition is skewed to low complexity. Residues 73–327 (RQQIIHSGHF…PLQPNLDFMD (255 aa)) are required for cytoplasmic localization. Residues 322–445 (NLDFMDTFEP…LLSPGPAPAP (124 aa)) form a transactivation domain region. 2 disordered regions span residues 347–402 (LPPP…CERT) and 632–711 (SHST…TDPK). Over residues 378-388 (LPNSLITSSAA) the composition is skewed to polar residues. Positions 632 to 643 (SHSTSSQPSPVS) are enriched in low complexity. Serine 667 carries the post-translational modification Phosphoserine. Residues 670-685 (VPATGSSRDCPNSGQA) are compositionally biased toward polar residues. The span at 686 to 704 (SPCPSEQSPSPQSPQNNCS) shows a compositional bias: low complexity. The region spanning 717–767 (KNRQKHISAEQKRRFNIRMGFNTLNSLISNNSKQTSHAITLQKTMEYITKL) is the bHLH domain. The interval 767 to 788 (LQQERMQMQEEARRLREEIEEL) is leucine-zipper. Residues 830–879 (WKFWIFSMIIKPLFESFKGMVSTSSLEEFHRTALSWLDQHCSLPVLRPMV) are mediates heterotypic interactions between MLXIP and MLX and is required for cytoplasmic localization. The interval 897–917 (SQLPEQASEAVTRMGKRSGES) is disordered.

Efficient DNA binding requires dimerization with another bHLH protein. Binds DNA as a homodimer or a heterodimer with MLX/TCFL4.

The protein resides in the cytoplasm. It is found in the nucleus. It localises to the mitochondrion outer membrane. Functionally, binds DNA as a heterodimer with MLX/TCFL4 and activates transcription. Binds to the canonical E box sequence 5'-CACGTG-3'. Plays a role in transcriptional activation of glycolytic target genes. Involved in glucose-responsive gene regulation. Regulates transcription in response to changes in cellular carbohydrate abundance such as occurs during fasting to feeding metabolic transition. Refeeding stimulates MLXIPL/ChREBP transcription factor, leading to increased BCKDK to PPM1K expression ratio, phosphorylation and activation of ACLY that ultimately results in the generation of malonyl-CoA and oxaloacetate immediate substrates of de novo lipogenesis and gluconeogenesis, respectively. The sequence is that of MLX-interacting protein from Mus musculus (Mouse).